Consider the following 389-residue polypeptide: Arrestin-C (389 aa).

The protein belongs to the arrestin family. In terms of tissue distribution, retina and pineal gland.

In terms of biological role, may play a role in an as yet undefined retina-specific signal transduction. Could bind to photoactivated-phosphorylated red/green opsins. This Aquarana catesbeiana (American bullfrog) protein is Arrestin-C (arr3).